Reading from the N-terminus, the 217-residue chain is Proteasome subunit beta type-6-B like protein (217 aa).

Residues 1 to 16 (MERHFMDSQIKGVSTG) constitute a propeptide, removed in mature form. The active-site Nucleophile is the Thr-17.

This sequence belongs to the peptidase T1B family. The 26S proteasome consists of a 20S proteasome core and two 19S regulatory subunits. The 20S proteasome core is composed of 28 subunits that are arranged in four stacked rings, resulting in a barrel-shaped structure. The two end rings are each formed by seven alpha subunits, and the two central rings are each formed by seven beta subunits. The catalytic chamber with the active sites is on the inside of the barrel.

The protein resides in the cytoplasm. The protein localises to the nucleus. The catalysed reaction is Cleavage of peptide bonds with very broad specificity.. Its function is as follows. The proteasome is a multicatalytic proteinase complex which is characterized by its ability to cleave peptides with Arg, Phe, Tyr, Leu, and Glu adjacent to the leaving group at neutral or slightly basic pH. The proteasome has an ATP-dependent proteolytic activity. This subunit is involved in antigen processing to generate class I binding peptides. This chain is Proteasome subunit beta type-6-B like protein (psmb6l-b), found in Salmo salar (Atlantic salmon).